We begin with the raw amino-acid sequence, 744 residues long: 1,4-alpha-glucan branching enzyme GlgB (744 aa).

The disordered stretch occupies residues 1-23 (MSGPEDPADRRHGEVPAPRRDIP). Residues 7–23 (PADRRHGEVPAPRRDIP) are compositionally biased toward basic and acidic residues. Asp-424 acts as the Nucleophile in catalysis. The Proton donor role is filled by Glu-476.

It belongs to the glycosyl hydrolase 13 family. GlgB subfamily. In terms of assembly, monomer.

It catalyses the reaction Transfers a segment of a (1-&gt;4)-alpha-D-glucan chain to a primary hydroxy group in a similar glucan chain.. It functions in the pathway glycan biosynthesis; glycogen biosynthesis. Its function is as follows. Catalyzes the formation of the alpha-1,6-glucosidic linkages in glycogen by scission of a 1,4-alpha-linked oligosaccharide from growing alpha-1,4-glucan chains and the subsequent attachment of the oligosaccharide to the alpha-1,6 position. The polypeptide is 1,4-alpha-glucan branching enzyme GlgB (Nocardia farcinica (strain IFM 10152)).